A 324-amino-acid chain; its full sequence is tRNA U34 carboxymethyltransferase (324 aa).

Residues lysine 91, tryptophan 105, lysine 110, glycine 130, 152–154 (DPS), 181–182 (IE), methionine 196, tyrosine 200, and arginine 315 each bind carboxy-S-adenosyl-L-methionine.

The protein belongs to the class I-like SAM-binding methyltransferase superfamily. CmoB family. As to quaternary structure, homotetramer.

It carries out the reaction carboxy-S-adenosyl-L-methionine + 5-hydroxyuridine(34) in tRNA = 5-carboxymethoxyuridine(34) in tRNA + S-adenosyl-L-homocysteine + H(+). In terms of biological role, catalyzes carboxymethyl transfer from carboxy-S-adenosyl-L-methionine (Cx-SAM) to 5-hydroxyuridine (ho5U) to form 5-carboxymethoxyuridine (cmo5U) at position 34 in tRNAs. This chain is tRNA U34 carboxymethyltransferase, found in Aliivibrio fischeri (strain MJ11) (Vibrio fischeri).